The primary structure comprises 520 residues: Lysine--tRNA ligase (520 aa).

The disordered stretch occupies residues 1-21; the sequence is MSDHLIPSIPTPAAAPAAAPA. The segment covering 12–21 has biased composition (low complexity); the sequence is PAAAPAAAPA. Mg(2+)-binding residues include Glu-430 and Glu-437.

This sequence belongs to the class-II aminoacyl-tRNA synthetase family. Homodimer. The cofactor is Mg(2+).

It localises to the cytoplasm. It carries out the reaction tRNA(Lys) + L-lysine + ATP = L-lysyl-tRNA(Lys) + AMP + diphosphate. This chain is Lysine--tRNA ligase, found in Variovorax paradoxus (strain S110).